We begin with the raw amino-acid sequence, 365 residues long: Chorismate synthase (365 aa).

NADP(+)-binding residues include Arg48 and Arg54. Residues Arg131–Ser133, Asn243–Ala244, Gly288, Lys303–Ser307, and Arg329 contribute to the FMN site.

The protein belongs to the chorismate synthase family. In terms of assembly, homotetramer. FMNH2 serves as cofactor.

It catalyses the reaction 5-O-(1-carboxyvinyl)-3-phosphoshikimate = chorismate + phosphate. It participates in metabolic intermediate biosynthesis; chorismate biosynthesis; chorismate from D-erythrose 4-phosphate and phosphoenolpyruvate: step 7/7. Its function is as follows. Catalyzes the anti-1,4-elimination of the C-3 phosphate and the C-6 proR hydrogen from 5-enolpyruvylshikimate-3-phosphate (EPSP) to yield chorismate, which is the branch point compound that serves as the starting substrate for the three terminal pathways of aromatic amino acid biosynthesis. This reaction introduces a second double bond into the aromatic ring system. This chain is Chorismate synthase, found in Sinorhizobium fredii (strain NBRC 101917 / NGR234).